The primary structure comprises 421 residues: Magnesium transporter MRS2-5 (421 aa).

Helical transmembrane passes span 357-377 (LLLTAATFVAAIFAAVTAVFG) and 393-413 (YVLLITGIGCGFLYFGFVLYF). The short motif at 377–379 (GMN) is the Required for magnesium transport activity element.

The protein belongs to the CorA metal ion transporter (MIT) (TC 1.A.35.5) family. Expressed in the whole plant.

The protein localises to the membrane. In terms of biological role, magnesium transporter that may mediate the influx of magnesium. This Arabidopsis thaliana (Mouse-ear cress) protein is Magnesium transporter MRS2-5 (MRS2-5).